The primary structure comprises 111 residues: Small ribosomal subunit protein bS16 (111 aa).

Residues 92–111 (MEVKAKNRKARPSKKEDKEA) are disordered.

This sequence belongs to the bacterial ribosomal protein bS16 family.

In Rickettsia massiliae (strain Mtu5), this protein is Small ribosomal subunit protein bS16.